Reading from the N-terminus, the 361-residue chain is Chorismate synthase (361 aa).

2 residues coordinate NADP(+): R48 and R54. FMN is bound by residues 125–127 (RSS), 238–239 (NA), G278, 293–297 (KPTSS), and R319.

It belongs to the chorismate synthase family. As to quaternary structure, homotetramer. It depends on FMNH2 as a cofactor.

It catalyses the reaction 5-O-(1-carboxyvinyl)-3-phosphoshikimate = chorismate + phosphate. Its pathway is metabolic intermediate biosynthesis; chorismate biosynthesis; chorismate from D-erythrose 4-phosphate and phosphoenolpyruvate: step 7/7. Its function is as follows. Catalyzes the anti-1,4-elimination of the C-3 phosphate and the C-6 proR hydrogen from 5-enolpyruvylshikimate-3-phosphate (EPSP) to yield chorismate, which is the branch point compound that serves as the starting substrate for the three terminal pathways of aromatic amino acid biosynthesis. This reaction introduces a second double bond into the aromatic ring system. The chain is Chorismate synthase from Yersinia enterocolitica serotype O:8 / biotype 1B (strain NCTC 13174 / 8081).